Consider the following 44-residue polypeptide: Entericidin A (44 aa).

A signal peptide spans Met1–Gly21. A lipid anchor (N-palmitoyl cysteine) is attached at Cys22. Cys22 carries the S-diacylglycerol cysteine lipid modification.

It belongs to the EcnA/EcnB lipoprotein family.

The protein localises to the cell membrane. In terms of biological role, acts as antidote to the effect of entericidin B. This chain is Entericidin A (ecnA), found in Citrobacter freundii.